A 330-amino-acid chain; its full sequence is Malate dehydrogenase (330 aa).

13-19 lines the NAD(+) pocket; sequence GAAGQIG. Positions 94 and 100 each coordinate substrate. NAD(+) is bound by residues asparagine 107, glutamine 114, and 131–133; that span reads VGN. The substrate site is built by asparagine 133 and arginine 164. Residue histidine 189 is the Proton acceptor of the active site.

This sequence belongs to the LDH/MDH superfamily. MDH type 2 family.

It carries out the reaction (S)-malate + NAD(+) = oxaloacetate + NADH + H(+). In terms of biological role, catalyzes the reversible oxidation of malate to oxaloacetate. The sequence is that of Malate dehydrogenase from Deinococcus radiodurans (strain ATCC 13939 / DSM 20539 / JCM 16871 / CCUG 27074 / LMG 4051 / NBRC 15346 / NCIMB 9279 / VKM B-1422 / R1).